Reading from the N-terminus, the 68-residue chain is Large ribosomal subunit protein uL29 (68 aa).

This sequence belongs to the universal ribosomal protein uL29 family.

The chain is Large ribosomal subunit protein uL29 (rpl29) from Thermoplasma acidophilum (strain ATCC 25905 / DSM 1728 / JCM 9062 / NBRC 15155 / AMRC-C165).